Here is a 161-residue protein sequence, read N- to C-terminus: Eukaryotic translation initiation factor 5A-2 (161 aa).

Lys-54 carries the hypusine modification.

The protein belongs to the eIF-5A family. Post-translationally, lys-54 undergoes hypusination, a unique post-translational modification that consists in the addition of a butylamino group from spermidine to lysine side chain and leads to the formation of a hypusine residue. eIF-5As are the only known proteins to undergo this modification, which is essential for their function. Expressed in the somatic tissues.

The protein localises to the cytoplasm. Translation factor that promotes translation elongation and termination, particularly upon ribosome stalling at specific amino acid sequence contexts. Binds between the exit (E) and peptidyl (P) site of the ribosome and promotes rescue of stalled ribosome: specifically required for efficient translation of polyproline-containing peptides as well as other motifs that stall the ribosome. Acts as a ribosome quality control (RQC) cofactor by joining the RQC complex to facilitate peptidyl transfer during CAT tailing step. Acts in somatic tissues and its function in the soma is essential for normal growth and reproduction. This chain is Eukaryotic translation initiation factor 5A-2 (iff-2), found in Caenorhabditis elegans.